The sequence spans 173 residues: MNKENKQELVAEMHDKLQRAQAVFLADFRGMNVGQATELRNELRKANAEYKVVKNTLLEIASKGTDKEGLNPYYAGPTAIALCYDDPVAAAKVLSRFNKENTNPFTLKAGVLTGKTINVADIQALADLPSREVLIAKMLGSMQAPASNFVRVLAAVPGGFVRALDAIRAQKEA.

This sequence belongs to the universal ribosomal protein uL10 family. In terms of assembly, part of the ribosomal stalk of the 50S ribosomal subunit. The N-terminus interacts with L11 and the large rRNA to form the base of the stalk. The C-terminus forms an elongated spine to which L12 dimers bind in a sequential fashion forming a multimeric L10(L12)X complex.

Forms part of the ribosomal stalk, playing a central role in the interaction of the ribosome with GTP-bound translation factors. In Geobacter sp. (strain M21), this protein is Large ribosomal subunit protein uL10.